The sequence spans 626 residues: Ankyrin repeat domain-containing protein 13B (626 aa).

Residue Met1 is modified to N-acetylmethionine. ANK repeat units lie at residues 47-76 (RGRT…DVGR) and 80-109 (SGWT…YQRV). Residues 442 to 470 (PVPSVRGSPGSETPSPGSDSSSVSSSSST) form a disordered region. A compositionally biased stretch (low complexity) spans 448-470 (GSPGSETPSPGSDSSSVSSSSST). The region spanning 503–522 (EDDDLLRFAIQQSLLEAGSE) is the UIM 1 domain. The segment at 534 to 614 (NSKPGTHPMS…RRRVRQEEEE (81 aa)) is disordered. Pro residues predominate over residues 554–575 (PPTPQRQPMPPAPVPSPRPSPG). UIM domains follow at residues 585–604 (SYDE…QEER) and 610–626 (QEEE…LTEQ).

As to quaternary structure, interacts with EGFR (ubiquitinated); the interaction is direct and may regulate EGFR internalization.

Its subcellular location is the cell membrane. It localises to the late endosome. The protein localises to the early endosome. Ubiquitin-binding protein that specifically recognizes and binds 'Lys-63'-linked ubiquitin. Does not bind 'Lys-48'-linked ubiquitin. Positively regulates the internalization of ligand-activated EGFR by binding to the Ub moiety of ubiquitinated EGFR at the cell membrane. This chain is Ankyrin repeat domain-containing protein 13B (Ankrd13b), found in Mus musculus (Mouse).